Consider the following 291-residue polypeptide: Transmembrane protein 41B (291 aa).

The tract at residues 1–39 (MAKGRVAERSQLGAHHTTPVGDGAAGTRGLAAPGSRDHQ) is disordered. At Thr18 the chain carries Phosphothreonine. At Ser35 the chain carries Phosphoserine. Transmembrane regions (helical) follow at residues 52 to 72 (MSLL…FLVY), 109 to 129 (FYVQ…TFAI), 147 to 169 (LALF…LSYL), 197 to 217 (LINY…FINI), 225 to 245 (PLKV…FVAI), and 262 to 282 (SWNS…PAIF). Positions 140–251 (GFLYPFPLAL…FVAIKAGTTL (112 aa)) are VTT domain; required for its function in autophagy.

The protein belongs to the TMEM41 family. As to quaternary structure, interacts with VMP1. Interacts with COPA, COPB1, VDAC1 and ERLIN2. Interacts with ATG2A. Interacts with SURF4. (Microbial infection) Interacts with Zika virus NS4A protein and Yellow fever virus NS4B protein.

It localises to the endoplasmic reticulum membrane. The protein localises to the endomembrane system. The protein resides in the cytoplasm. The enzyme catalyses a 1,2-diacyl-sn-glycero-3-phospho-L-serine(in) = a 1,2-diacyl-sn-glycero-3-phospho-L-serine(out). It carries out the reaction cholesterol(in) = cholesterol(out). The catalysed reaction is a 1,2-diacyl-sn-glycero-3-phosphocholine(in) = a 1,2-diacyl-sn-glycero-3-phosphocholine(out). It catalyses the reaction a 1,2-diacyl-sn-glycero-3-phosphoethanolamine(in) = a 1,2-diacyl-sn-glycero-3-phosphoethanolamine(out). Functionally, phospholipid scramblase involved in lipid homeostasis and membrane dynamics processes. Has phospholipid scramblase activity toward cholesterol and phosphatidylserine, as well as phosphatidylethanolamine and phosphatidylcholine. Required for autophagosome formation: participates in early stages of autophagosome biogenesis at the endoplasmic reticulum (ER) membrane by reequilibrating the leaflets of the ER as lipids are extracted by ATG2 (ATG2A or ATG2B) to mediate autophagosome assembly. In addition to autophagy, involved in other processes in which phospholipid scramblase activity is required. Required for normal motor neuron development. In terms of biological role, (Microbial infection) Critical host factor required for infection by human coronaviruses SARS-CoV-2, HCoV-OC43, HCoV-NL63, and HCoV-229E, as well as all flaviviruses tested such as Zika virus and Yellow fever virus. Required post-entry of the virus to facilitate the ER membrane remodeling necessary to form replication organelles. This Homo sapiens (Human) protein is Transmembrane protein 41B.